A 382-amino-acid chain; its full sequence is Alkanesulfonate monooxygenase (382 aa).

It belongs to the SsuD family.

It carries out the reaction an alkanesulfonate + FMNH2 + O2 = an aldehyde + FMN + sulfite + H2O + 2 H(+). Functionally, catalyzes the desulfonation of aliphatic sulfonates. This Pseudomonas sp protein is Alkanesulfonate monooxygenase.